The sequence spans 556 residues: 2-methylpropanoate--CoA ligase CCL4 (556 aa).

ATP contacts are provided by residues 192–200, 325–330, aspartate 423, 435–438, and lysine 531; these read TSGTTSSPK, HGYGLT, and IKDR. The SBD1 stretch occupies residues 260-325; it reads DSEIIYDMIK…TESLGFAVSH (66 aa). The interval 326–402 is SBD2; the sequence is GYGLTETAGL…LRGGSVMLGY (77 aa).

This sequence belongs to the ATP-dependent AMP-binding enzyme family. Mostly expressed in old leaves and in cones and glandular trichomes (lupulin glands) after flowering, and, to a lower extent, in stems, young leaves and flowers.

It localises to the cytoplasm. The protein resides in the cytosol. The catalysed reaction is 2-methylpropanoate + ATP + CoA = 2-methylpropanoyl-CoA + AMP + diphosphate. It carries out the reaction propanoate + ATP + CoA = propanoyl-CoA + AMP + diphosphate. It catalyses the reaction butanoate + ATP + CoA = butanoyl-CoA + AMP + diphosphate. The enzyme catalyses 2-methylbutanoate + ATP + CoA = 2-methylbutanoyl-CoA + AMP + diphosphate. It participates in secondary metabolite biosynthesis. In terms of biological role, involved in the biosynthesis of prenylated phenolics natural products which contribute to the bitter taste of beer and display broad biological activities. Catalyzes the ligation of CoA on 2-methylpropanoate (isobutyric acid) and 2-methylbutanoate to produce 2-methylpropanoyl-CoA and 2-methylbutanoyl-CoA, respectively. Can also use propanoate and butanoate as substrates with a lower efficiency. This Humulus lupulus (European hop) protein is 2-methylpropanoate--CoA ligase CCL4.